Reading from the N-terminus, the 951-residue chain is Valine--tRNA ligase (951 aa).

The 'HIGH' region signature appears at 42–52 (PNVTGSLHMGH). The 'KMSKS' region motif lies at 554–558 (KMSKS). Residue K557 participates in ATP binding. Residues 882-951 (LIDKDAELAR…EEQKATIAAL (70 aa)) adopt a coiled-coil conformation.

This sequence belongs to the class-I aminoacyl-tRNA synthetase family. ValS type 1 subfamily. In terms of assembly, monomer.

Its subcellular location is the cytoplasm. It carries out the reaction tRNA(Val) + L-valine + ATP = L-valyl-tRNA(Val) + AMP + diphosphate. In terms of biological role, catalyzes the attachment of valine to tRNA(Val). As ValRS can inadvertently accommodate and process structurally similar amino acids such as threonine, to avoid such errors, it has a 'posttransfer' editing activity that hydrolyzes mischarged Thr-tRNA(Val) in a tRNA-dependent manner. The chain is Valine--tRNA ligase from Vibrio vulnificus (strain CMCP6).